The chain runs to 425 residues: Serine--tRNA ligase 2 (425 aa).

234–236 (TAE) is an L-serine binding site. Residue 265 to 267 (RVE) participates in ATP binding. An L-serine-binding site is contributed by E288. 352 to 355 (EVSS) lines the ATP pocket. S388 is a binding site for L-serine.

The protein belongs to the class-II aminoacyl-tRNA synthetase family. Type-1 seryl-tRNA synthetase subfamily. In terms of assembly, homodimer. The tRNA molecule binds across the dimer.

Its subcellular location is the cytoplasm. The enzyme catalyses tRNA(Ser) + L-serine + ATP = L-seryl-tRNA(Ser) + AMP + diphosphate + H(+). It catalyses the reaction tRNA(Sec) + L-serine + ATP = L-seryl-tRNA(Sec) + AMP + diphosphate + H(+). Its pathway is aminoacyl-tRNA biosynthesis; selenocysteinyl-tRNA(Sec) biosynthesis; L-seryl-tRNA(Sec) from L-serine and tRNA(Sec): step 1/1. In terms of biological role, catalyzes the attachment of serine to tRNA(Ser). Is also able to aminoacylate tRNA(Sec) with serine, to form the misacylated tRNA L-seryl-tRNA(Sec), which will be further converted into selenocysteinyl-tRNA(Sec). The sequence is that of Serine--tRNA ligase 2 from Clostridium acetobutylicum (strain ATCC 824 / DSM 792 / JCM 1419 / IAM 19013 / LMG 5710 / NBRC 13948 / NRRL B-527 / VKM B-1787 / 2291 / W).